The following is a 573-amino-acid chain: ATP-dependent RNA helicase RhlB (573 aa).

Positions 9 to 37 (LTFSSFDLHPALVAGLESAGFTRCTPIQA) match the Q motif motif. In terms of domain architecture, Helicase ATP-binding spans 40–220 (LPVALPGGDV…YEHMNEPEKL (181 aa)). 53 to 60 (AQTGTGKT) provides a ligand contact to ATP. The DEAD box motif lies at 166-169 (DEAD). The region spanning 231 to 393 (RVRQRIYFPS…PVTTELLTPL (163 aa)) is the Helicase C-terminal domain. A compositionally biased stretch (low complexity) spans 391 to 400 (TPLPRTPRAT). A disordered region spans residues 391-559 (TPLPRTPRAT…AKPSGSPSLL (169 aa)). Over residues 402–411 (EGEEVDDDAG) the composition is skewed to acidic residues. A compositionally biased stretch (basic and acidic residues) spans 419-432 (REAREQRAADEARR). The span at 435-449 (GRSGPGGASRSGSGG) shows a compositional bias: gly residues. The segment covering 450–461 (GRRDGAGADGKP) has biased composition (basic and acidic residues). Over residues 476-499 (PAAAPSETPVVVAAAAETPAVTAA) the composition is skewed to low complexity. Residues 505–514 (PRKRRRRRNG) are compositionally biased toward basic residues. Composition is skewed to low complexity over residues 516–528 (PVEG…ASTP) and 541–559 (VVAK…PSLL).

It belongs to the DEAD box helicase family. RhlB subfamily. As to quaternary structure, component of the RNA degradosome, which is a multiprotein complex involved in RNA processing and mRNA degradation.

The protein localises to the cytoplasm. It carries out the reaction ATP + H2O = ADP + phosphate + H(+). Functionally, DEAD-box RNA helicase involved in RNA degradation. Has RNA-dependent ATPase activity and unwinds double-stranded RNA. This Xanthomonas campestris pv. campestris (strain B100) protein is ATP-dependent RNA helicase RhlB.